The sequence spans 622 residues: MEESEPERKRARTDEVPAGGSRSEAEDEDDEDYVPYVPLRQRRQLLLQKLLQRRRKGAAEEEQQDSGSEPRGDEDDIPLGPQSNVSLLDQHQHLKEKAEARKESAKEKQLKEEEKILESVAEGRALMSVKEMAKGITYDDPIKTSWTPPRYVLSMSEERHERVRKKYHILVEGDGIPPPIKSFKEMKFPAAILRGLKKKGIHHPTPIQIQGIPTILSGRDMIGIAFTGSGKTLVFTLPVIMFCLEQEKRLPFSKREGPYGLIICPSRELARQTHGILEYYCRLLQEDSSPLLRCALCIGGMSVKEQMETIRHGVHMMVATPGRLMDLLQKKMVSLDICRYLALDEADRMIDMGFEGDIRTIFSYFKGQRQTLLFSATMPKKIQNFAKSALVKPVTINVGRAGAASLDVIQEVEYVKEEAKMVYLLECLQKTPPPVLIFAEKKADVDAIHEYLLLKGVEAVAIHGGKDQEERTKAIEAFREGKKDVLVATDVASKGLDFPAIQHVINYDMPEEIENYVHRIGRTGRSGNTGIATTFINKACDESVLMDLKALLLEAKQKVPPVLQVLHCGDESMLDIGGERGCAFCGGLGHRITDCPKLEAMQTKQVSNIGRKDYLAHSSMDF.

Over residues 1–15 the composition is skewed to basic and acidic residues; it reads MEESEPERKRARTDE. Disordered stretches follow at residues 1–39 and 52–84; these read MEESEPERKRARTDEVPAGGSRSEAEDEDDEDYVPYVPL and QRRRKGAAEEEQQDSGSEPRGDEDDIPLGPQSN. Residue Ser-4 is modified to Phosphoserine. Residue Lys-9 is modified to N6-acetyllysine. A Glycyl lysine isopeptide (Lys-Gly) (interchain with G-Cter in ubiquitin) cross-link involves residue Lys-9. Phosphoserine occurs at positions 21 and 23. Tyr-33 is modified (phosphotyrosine). Lys-115 participates in a covalent cross-link: Glycyl lysine isopeptide (Lys-Gly) (interchain with G-Cter in ubiquitin). The short motif at 181–209 is the Q motif element; it reads KSFKEMKFPAAILRGLKKKGIHHPTPIQI. The Helicase ATP-binding domain occupies 212–396; that stretch reads IPTILSGRDM…KSALVKPVTI (185 aa). Residue 225-232 participates in ATP binding; sequence AFTGSGKT. A DEAD box motif is present at residues 344 to 347; it reads DEAD. The 161-residue stretch at 407–567 folds into the Helicase C-terminal domain; the sequence is DVIQEVEYVK…KVPPVLQVLH (161 aa). A Phosphotyrosine; by BTK modification is found at Tyr-414. Glycyl lysine isopeptide (Lys-Gly) (interchain with G-Cter in SUMO2) cross-links involve residues Lys-416 and Lys-442. A CCHC-type zinc finger spans residues 580-597; that stretch reads RGCAFCGGLGHRITDCPK.

This sequence belongs to the DEAD box helicase family. DDX41 subfamily. Identified in the spliceosome C complex. Interacts with ERCC6. Interacts with FAM50A. Interacts with STING1. Interacts with CGAS. Interacts with several spliceosomes components such as PRP19 or CDC5L. Post-translationally, acetylation at Lys-9 regulates the nuclear/cytoplasmic localization. Phosphorylated by BTK; phosphorylation induces binding to dsDNA and STING1. In terms of processing, 'Lys-48'-linked ubiquitinated and degraded by TRIM21 leading to negative regulation of the innate immune response to intracellular dsDNA.

The protein localises to the nucleus. The protein resides in the cytoplasm. The enzyme catalyses ATP + H2O = ADP + phosphate + H(+). Functionally, multifunctional protein that participates in many aspects of cellular RNA metabolism. Plays pivotal roles in innate immune sensing and hematopoietic homeostasis. Recognizes foreign or self-nucleic acids generated during microbial infection, thereby initiating anti-pathogen responses. Mechanistically, phosphorylation by BTK allows binding to dsDNA leading to interaction with STING1. Modulates the homeostasis of dsDNA through its ATP-dependent DNA-unwinding activity and ATP-independent strand-annealing activity. In turn, induces STING1-mediated type I interferon and cytokine responses to DNA and DNA viruses. Selectively modulates the transcription of certain immunity-associated genes by regulating their alternative splicing. Binds to RNA (R)-loops, structures consisting of DNA/RNA hybrids and a displaced strand of DNA that occur during transcription, and prevents their accumulation, thereby maintaining genome stability. Also participates in pre-mRNA splicing, translational regulation and snoRNA processing, which is essential for ribosome biogenesis. In Homo sapiens (Human), this protein is Probable ATP-dependent RNA helicase DDX41 (DDX41).